The following is a 179-amino-acid chain: Large ribosomal subunit protein uL5 (179 aa).

It belongs to the universal ribosomal protein uL5 family. In terms of assembly, part of the 50S ribosomal subunit; part of the 5S rRNA/L5/L18/L25 subcomplex. Contacts the 5S rRNA and the P site tRNA. Forms a bridge to the 30S subunit in the 70S ribosome.

In terms of biological role, this is one of the proteins that bind and probably mediate the attachment of the 5S RNA into the large ribosomal subunit, where it forms part of the central protuberance. In the 70S ribosome it contacts protein S13 of the 30S subunit (bridge B1b), connecting the 2 subunits; this bridge is implicated in subunit movement. Contacts the P site tRNA; the 5S rRNA and some of its associated proteins might help stabilize positioning of ribosome-bound tRNAs. This Bacillus cereus (strain 03BB102) protein is Large ribosomal subunit protein uL5.